Reading from the N-terminus, the 281-residue chain is 2-dehydro-3-deoxyphosphooctonate aldolase (281 aa).

The protein belongs to the KdsA family.

It is found in the cytoplasm. It carries out the reaction D-arabinose 5-phosphate + phosphoenolpyruvate + H2O = 3-deoxy-alpha-D-manno-2-octulosonate-8-phosphate + phosphate. Its pathway is carbohydrate biosynthesis; 3-deoxy-D-manno-octulosonate biosynthesis; 3-deoxy-D-manno-octulosonate from D-ribulose 5-phosphate: step 2/3. It functions in the pathway bacterial outer membrane biogenesis; lipopolysaccharide biosynthesis. This chain is 2-dehydro-3-deoxyphosphooctonate aldolase, found in Pseudomonas fluorescens (strain ATCC BAA-477 / NRRL B-23932 / Pf-5).